A 257-amino-acid polypeptide reads, in one-letter code: uncharacterized protein (257 aa).

The chain crosses the membrane as a helical span at residues 6–26; that stretch reads IFWLNLAAIIIISIVVSGGMF.

This sequence belongs to the staphylococcal tandem lipoprotein family.

Its subcellular location is the cell membrane. This is an uncharacterized protein from Staphylococcus aureus (strain Mu50 / ATCC 700699).